The primary structure comprises 177 residues: Large ribosomal subunit protein uL10 (177 aa).

The protein belongs to the universal ribosomal protein uL10 family. Part of the ribosomal stalk of the 50S ribosomal subunit. The N-terminus interacts with L11 and the large rRNA to form the base of the stalk. The C-terminus forms an elongated spine to which L12 dimers bind in a sequential fashion forming a multimeric L10(L12)X complex.

Forms part of the ribosomal stalk, playing a central role in the interaction of the ribosome with GTP-bound translation factors. This is Large ribosomal subunit protein uL10 from Legionella pneumophila (strain Corby).